We begin with the raw amino-acid sequence, 623 residues long: V-type proton ATPase catalytic subunit A (623 aa).

252–259 contributes to the ATP binding site; sequence GAFGCGKT.

The protein belongs to the ATPase alpha/beta chains family. V-ATPase is a heteromultimeric enzyme composed of a peripheral catalytic V1 complex (main components: subunits A, B, C, D, E, and F) attached to an integral membrane V0 proton pore complex (main component: the proteolipid protein).

The catalysed reaction is ATP + H2O + 4 H(+)(in) = ADP + phosphate + 5 H(+)(out). Functionally, catalytic subunit of the peripheral V1 complex of vacuolar ATPase. V-ATPase vacuolar ATPase is responsible for acidifying a variety of intracellular compartments in eukaryotic cells. This is V-type proton ATPase catalytic subunit A (CVA69.24) from Gossypium hirsutum (Upland cotton).